Reading from the N-terminus, the 678-residue chain is Secretin ExeD (678 aa).

Positions 1–25 (MINKGKGWRLATVAAALMMAGSAWA) are cleaved as a signal peptide. Residues 26 to 122 (TEYSASFKNA…VVDETNPGIG (97 aa)) form an N0 region. Positions 124–188 (EMVTRVVPVR…EVVRRVDKAG (65 aa)) are N1. Residues 189–264 (DQEVDIIKLK…MVRQLDRDLQ (76 aa)) form an N2 region. The N3 stretch occupies residues 267–348 (GNTRVFYLKY…ELEQVVAKLD (82 aa)). Residues 353–602 (QVLVEAIIVE…VFIRPTILRD (250 aa)) form a secretin region. The s domain stretch occupies residues 604-678 (NVYSGISSNK…GVQPFVQGNK (75 aa)).

It belongs to the bacterial secretin family. GSP D subfamily. In terms of assembly, forms a cylindrical channel with 15 subunits.

Its subcellular location is the cell outer membrane. Involved in a type II secretion system (T2SS, formerly general secretion pathway, GSP) for the export of proteins. This subunit forms the outer membrane channel. The sequence is that of Secretin ExeD (exeD) from Aeromonas hydrophila.